A 638-amino-acid chain; its full sequence is RNA exonuclease 3 (638 aa).

The tract at residues 37 to 136 (AQDQVLEQKE…PPRRAPKEAL (100 aa)) is disordered. Residues 55–76 (LKLEPRPEAKETPKDDLRHVSD) show a composition bias toward basic and acidic residues. The span at 77–111 (SGRSTPVKKTTAPATNAENISPVSRQPNIPKNTAT) shows a compositional bias: polar residues. Residues 408-584 (ICFDCEMGYT…VEDALATGDL (177 aa)) enclose the Exonuclease domain. Over residues 612–622 (DSSSNTVSMQT) the composition is skewed to polar residues. The interval 612-638 (DSSSNTVSMQTKLGEGAGAKRAREGTS) is disordered.

This sequence belongs to the REXO1/REXO3 family.

Its subcellular location is the cytoplasm. The protein resides in the nucleus. Its function is as follows. 3' to 5' exoribonuclease required for proper 3' end maturation of MRP RNA and of the U5L snRNA. The sequence is that of RNA exonuclease 3 (rex3) from Emericella nidulans (strain FGSC A4 / ATCC 38163 / CBS 112.46 / NRRL 194 / M139) (Aspergillus nidulans).